The following is a 914-amino-acid chain: Protein ECT2 (914 aa).

Alanine 2 is modified (N-acetylalanine). 2 BRCT domains span residues 171–260 and 266–354; these read LYCT…AAVD and FKVP…MYLY. Threonine 359 is modified (phosphothreonine; by PKC/PRKCI). 2 positions are modified to phosphoserine: serine 367 and serine 370. Phosphothreonine; by CDK1 is present on threonine 373. At serine 376 the chain carries Phosphoserine. Short sequence motifs (nuclear localization signal) lie at residues 378–382 and 401–405; these read RKRRR and PRKRP. A disordered region spans residues 388-449; sequence AQLSRETDVS…SKSSTPVPSK (62 aa). Polar residues predominate over residues 418 to 429; the sequence is DISNTPESSINY. Low complexity predominate over residues 432–449; it reads TPKSCTKSSKSSTPVPSK. Threonine 444 is modified (phosphothreonine; by CDK1). Positions 452–641 constitute a DH domain; sequence ARWQVAKELY…KEVMTHINED (190 aa). Lysine 611 participates in a covalent cross-link: Glycyl lysine isopeptide (Lys-Gly) (interchain with G-Cter in SUMO2). In terms of domain architecture, PH spans 675-794; the sequence is RVETISLGEH…KMLCRHVANT (120 aa). 2 positions are modified to phosphoserine: serine 716 and serine 842. A Phosphothreonine; by CDK1 modification is found at threonine 846. The interval 857 to 884 is disordered; it reads TSHGSVEGRSPSSNDKHVMSRLSSTSSL. A phosphoserine mark is found at serine 861 and serine 866.

Homodimer. Homooligomer. Found in the centralspindlin complex. Interacts with NR1I3. Interacts (Thr-359 phosphorylated form) with PARD6A; the interaction is observed in cancer cells. Interacts (Thr-359 phosphorylated form) with PRKCI; the interaction is observed in cancer cells. Interacts with PKP4; the interaction is observed at the midbody. Interacts with RACGAP1/CYK4; the interaction is direct, occurs in a microtubule-dependent manner, occurs at anaphase and during cytokinesis, is inhibited in metaphase by phosphorylation of ECT2 on Thr-373 and is stimulated in early anaphase by dephosphorylation of ECT2 probably on Thr-373 through CDK1 activity. Interacts with PLK1; the interaction is stimulated upon its phosphorylation on Thr-444. Interacts with RHOA; the interaction results in allosteric activation of ECT2. Interacts with KIF23, PARD3, PARD6B and PRKCQ. Interacts with NEDD9/HEF1. Post-translationally, phosphorylated by PLK1 in vitro. Hyperphosphorylated during the G2 phase of the cell cycle. Phosphorylation at Thr-373 occurs during the G2/M phase, relieves its auto-inhibition status and stimulates its GEF activity. Phosphorylation at Thr-444 in G2/M phase is required for subsequent binding with PLK1 and Rho exchange activation. Dephosphorylated at the time of cytokinesis. Phosphorylation at Thr-359 is required for its transformation activity in cancer cells. Expressed in lung epithelial cells (at protein level). Expressed in squamous cell carcinoma, primary non-small cell lung cancer tumors and lung adenocarcinoma.

It is found in the nucleus. Its subcellular location is the cytoplasm. The protein localises to the cytoskeleton. It localises to the spindle. The protein resides in the cleavage furrow. It is found in the midbody. Its subcellular location is the cell junction. The protein localises to the tight junction. It localises to the microtubule organizing center. The protein resides in the centrosome. Autoinhibited by the C-terminal PH domain which folds back and binds to the surface of the DH domain, blocking binding of RHOA to the catalytic center of the DH domain. The 2nd BRCT domain is also involved in inhibition, probably by helping to impede RHOA binding. Allosterically activated by binding of activated GTP-bound RHOA to the PH domain which stimulates the release of PH inhibition and promotes the binding of substrate RHOA to the catalytic center. Binding of phosphorylated RACGAP1 to the N-terminal BRCT domain-containing region also releases autoinhibition. In terms of biological role, guanine nucleotide exchange factor (GEF) that catalyzes the exchange of GDP for GTP. Promotes guanine nucleotide exchange on the Rho family members of small GTPases, like RHOA, RHOC, RAC1 and CDC42. Required for signal transduction pathways involved in the regulation of cytokinesis. Component of the centralspindlin complex that serves as a microtubule-dependent and Rho-mediated signaling required for the myosin contractile ring formation during the cell cycle cytokinesis. Regulates the translocation of RHOA from the central spindle to the equatorial region. Plays a role in the control of mitotic spindle assembly; regulates the activation of CDC42 in metaphase for the process of spindle fibers attachment to kinetochores before chromosome congression. Involved in the regulation of epithelial cell polarity; participates in the formation of epithelial tight junctions in a polarity complex PARD3-PARD6-protein kinase PRKCQ-dependent manner. Plays a role in the regulation of neurite outgrowth. Inhibits phenobarbital (PB)-induced NR1I3 nuclear translocation. Stimulates the activity of RAC1 through its association with the oncogenic PARD6A-PRKCI complex in cancer cells, thereby acting to coordinately drive tumor cell proliferation and invasion. Also stimulates genotoxic stress-induced RHOB activity in breast cancer cells leading to their cell death. In Homo sapiens (Human), this protein is Protein ECT2.